Consider the following 383-residue polypeptide: Putative glutamate--cysteine ligase 2-2 (383 aa).

Belongs to the glutamate--cysteine ligase type 2 family. YbdK subfamily.

The catalysed reaction is L-cysteine + L-glutamate + ATP = gamma-L-glutamyl-L-cysteine + ADP + phosphate + H(+). Functionally, ATP-dependent carboxylate-amine ligase which exhibits weak glutamate--cysteine ligase activity. In Legionella pneumophila (strain Paris), this protein is Putative glutamate--cysteine ligase 2-2.